The following is a 327-amino-acid chain: Secondary metabolism regulator LAE1 (327 aa).

Belongs to the methyltransferase superfamily. LaeA methyltransferase family.

It localises to the nucleus. It catalyses the reaction L-methionyl-[protein] + S-adenosyl-L-methionine = S-methyl-L-methionyl-[protein] + S-adenosyl-L-homocysteine. Its function is as follows. Secondary metabolism regulator that controls the expression of the tenuazonic acid biosynthesis cluster. Methyltransferase that performs automethylation. No other methyl-accepting substrate has been identified yet. This is Secondary metabolism regulator LAE1 from Pyricularia oryzae (strain 70-15 / ATCC MYA-4617 / FGSC 8958) (Rice blast fungus).